The chain runs to 772 residues: Elongin-A (772 aa).

The TFIIS N-terminal domain maps to 4 to 79 (ESALQVVEKL…AQWKKLVPVE (76 aa)). Basic and acidic residues-rich tracts occupy residues 79-105 (ERNA…LQKE) and 136-156 (LSEL…DERK). Disordered stretches follow at residues 79–403 (ERNA…FEQP) and 418–466 (KKKK…EKPA). At serine 196 the chain carries Phosphoserine. Composition is skewed to basic and acidic residues over residues 226–235 (QERHLGEPHG), 253–269 (RPVD…VSRE), 275–308 (LSKE…EGSS), 321–343 (SDNH…KSKQ), and 372–384 (PEGK…DRKS). Phosphoserine is present on residues serine 384 and serine 387. The residue at position 394 (threonine 394) is a Phosphothreonine. The residue at position 434 (lysine 434) is an N6-acetyllysine. Positions 434–443 (KGLKKNDSKS) are enriched in basic and acidic residues. At serine 516 the chain carries Phosphoserine. The interval 522–681 (EAGFTGRRMN…PPRDVRRRQE (160 aa)) is activation domain. Residues 550–559 (TLHQQCIRVL) form a BC-box region. Positions 566–610 (IFEVGGVPYSVLEPVLERCTPDQLYRIEEYNHVLIEETDQLWKVH) constitute an F-box domain. The tract at residues 674–732 (RDVRRRQEKFGTGGAAVPEKIKIKPAPYPMGSSHASASSISFNPSPEEPAYDGPSTSSA) is disordered. Residues 705–714 (SSHASASSIS) are compositionally biased toward low complexity.

In terms of assembly, heterotrimer of an A (ELOA, ELOA2 or ELOA3P), ELOB and ELOC subunit. Part of a multisubunit ubiquitin ligase complex consisting of elongin BC complex (ELOB and ELOC), elongin A/ELOA, RBX1 and CUL5. Interacts with ERCC6; the interaction is induced by DNA damaging agents or inhibitors of RNA polymerase II elongation. Interacts (via BC-box) with CUL5.

The protein resides in the nucleus. In terms of biological role, SIII, also known as elongin, is a general transcription elongation factor that increases the RNA polymerase II transcription elongation past template-encoded arresting sites. Subunit A is transcriptionally active and its transcription activity is strongly enhanced by binding to the dimeric complex of the SIII regulatory subunits B and C (elongin BC complex). Functionally, as part of a multisubunit complex composed of elongin BC complex (ELOB and ELOC), elongin A/ELOA, RBX1 and CUL5; polyubiquitinates monoubiquitinated POLR2A. The chain is Elongin-A from Homo sapiens (Human).